We begin with the raw amino-acid sequence, 207 residues long: Phenazine biosynthesis protein PhzD (207 aa).

Asp-38 (proton donor) is an active-site residue. Residues Gln-78, Arg-87, Lys-122, and 151–155 each bind substrate; that span reads YAHVG.

This sequence belongs to the isochorismatase family. As to quaternary structure, homodimer.

The catalysed reaction is (2S)-2-amino-4-deoxychorismate + H2O = (5S,6S)-6-amino-5-hydroxycyclohexa-1,3-diene-1-carboxyate + pyruvate. Its pathway is antibiotic biosynthesis; phenazine biosynthesis. Involved in the biosynthesis of the antibiotic phenazine, a nitrogen-containing heterocyclic molecule having important roles in virulence, competition and biological control. Catalyzes the hydrolysis of the vinyl ether functional group of 2-amino-2-deoxyisochorismate (ADIC), yielding pyruvate and trans-2,3-dihydro-3-hydroxyanthranilic acid (DHHA). The sequence is that of Phenazine biosynthesis protein PhzD from Pseudomonas fluorescens.